A 111-amino-acid polypeptide reads, in one-letter code: Nucleoid-associated protein LBA0378 (111 aa).

Belongs to the YbaB/EbfC family. As to quaternary structure, homodimer.

It is found in the cytoplasm. It localises to the nucleoid. In terms of biological role, binds to DNA and alters its conformation. May be involved in regulation of gene expression, nucleoid organization and DNA protection. The polypeptide is Nucleoid-associated protein LBA0378 (Lactobacillus acidophilus (strain ATCC 700396 / NCK56 / N2 / NCFM)).